A 227-amino-acid polypeptide reads, in one-letter code: Cytochrome c oxidase subunit 2 (227 aa).

At 1-14 the chain is on the mitochondrial intermembrane side; it reads MAYPFQLGLQDATS. A helical transmembrane segment spans residues 15–45; the sequence is PIMEELMNFHDHTLMIVFLISSLVLYIISLM. At 46–59 the chain is on the mitochondrial matrix side; sequence LTTKLTHTSTMDAQ. The chain crosses the membrane as a helical span at residues 60-87; sequence EVETIWTILPAAILILIALPSLRILYMM. The Mitochondrial intermembrane segment spans residues 88–227; sequence DEINNPALTV…YFENWSASMI (140 aa). H161, C196, E198, C200, H204, and M207 together coordinate Cu cation. Position 198 (E198) interacts with Mg(2+). Y218 carries the phosphotyrosine modification.

This sequence belongs to the cytochrome c oxidase subunit 2 family. As to quaternary structure, component of the cytochrome c oxidase (complex IV, CIV), a multisubunit enzyme composed of 14 subunits. The complex is composed of a catalytic core of 3 subunits MT-CO1, MT-CO2 and MT-CO3, encoded in the mitochondrial DNA, and 11 supernumerary subunits COX4I, COX5A, COX5B, COX6A, COX6B, COX6C, COX7A, COX7B, COX7C, COX8 and NDUFA4, which are encoded in the nuclear genome. The complex exists as a monomer or a dimer and forms supercomplexes (SCs) in the inner mitochondrial membrane with NADH-ubiquinone oxidoreductase (complex I, CI) and ubiquinol-cytochrome c oxidoreductase (cytochrome b-c1 complex, complex III, CIII), resulting in different assemblies (supercomplex SCI(1)III(2)IV(1) and megacomplex MCI(2)III(2)IV(2)). Found in a complex with TMEM177, COA6, COX18, COX20, SCO1 and SCO2. Interacts with TMEM177 in a COX20-dependent manner. Interacts with COX20. Interacts with COX16. Requires Cu cation as cofactor.

It is found in the mitochondrion inner membrane. The enzyme catalyses 4 Fe(II)-[cytochrome c] + O2 + 8 H(+)(in) = 4 Fe(III)-[cytochrome c] + 2 H2O + 4 H(+)(out). In terms of biological role, component of the cytochrome c oxidase, the last enzyme in the mitochondrial electron transport chain which drives oxidative phosphorylation. The respiratory chain contains 3 multisubunit complexes succinate dehydrogenase (complex II, CII), ubiquinol-cytochrome c oxidoreductase (cytochrome b-c1 complex, complex III, CIII) and cytochrome c oxidase (complex IV, CIV), that cooperate to transfer electrons derived from NADH and succinate to molecular oxygen, creating an electrochemical gradient over the inner membrane that drives transmembrane transport and the ATP synthase. Cytochrome c oxidase is the component of the respiratory chain that catalyzes the reduction of oxygen to water. Electrons originating from reduced cytochrome c in the intermembrane space (IMS) are transferred via the dinuclear copper A center (CU(A)) of subunit 2 and heme A of subunit 1 to the active site in subunit 1, a binuclear center (BNC) formed by heme A3 and copper B (CU(B)). The BNC reduces molecular oxygen to 2 water molecules using 4 electrons from cytochrome c in the IMS and 4 protons from the mitochondrial matrix. The sequence is that of Cytochrome c oxidase subunit 2 (MT-CO2) from Lemniscomys barbarus (Barbary striped grass mouse).